Consider the following 279-residue polypeptide: MKLMLEIVKNISEPVGKLAIWFNETYQVDVSETINKWNELTGMNITVQENAVSADDTTAEETEYSVVVNENPTRTAARTRKESKTAAKPRKMQIPKTKDVCQHIFKSGSRAGEQCTTKPKNNALFCSAHRVRNSVTSNATEASEKTVAKTNGTAAPQKRGVKSKSPTVIPSDFDDSDSSSSATRGLRKAPTLSPRKPPPTTTTASSAQEEEDEQQAHFSGSSSPPPKNNGNGAVYSDSSSDEDDDDAHHTTVIPLLKKGARKPLDENVQFTSDSSDEED.

A disordered region spans residues 136 to 279 (TSNATEASEK…FTSDSSDEED (144 aa)). Over residues 228-238 (NNGNGAVYSDS) the composition is skewed to low complexity.

This is an uncharacterized protein from Invertebrate iridescent virus 3 (IIV-3).